The sequence spans 290 residues: MPGMRDIKRRIRSIKSTQQITKAMKMVAAAKLRKAQEKVIQARPYAKRIQGVLSRLVAAASDVNHPLLTTREVKRVGYVVITADRGLCGGYNANIIRKVNNEIKGRDDVSLVCVGRKSRDFFKRMGKRIEADYVGLGEDISFGMAKEIAAKVMELYEQGTVDQVQLVFTEFYSALTQKPVQMQLLPIPAQAGESANSAKDSKGPQPLYAFEPSPEAVLDELLPKYVENQIYRALLESKASEQGARMTAMGSATDNAKEMINKLTLSFNRARQAAITKEISEVVGGAAALG.

Belongs to the ATPase gamma chain family. F-type ATPases have 2 components, CF(1) - the catalytic core - and CF(0) - the membrane proton channel. CF(1) has five subunits: alpha(3), beta(3), gamma(1), delta(1), epsilon(1). CF(0) has three main subunits: a, b and c.

It is found in the cell membrane. Functionally, produces ATP from ADP in the presence of a proton gradient across the membrane. The gamma chain is believed to be important in regulating ATPase activity and the flow of protons through the CF(0) complex. This chain is ATP synthase gamma chain, found in Heliobacterium modesticaldum (strain ATCC 51547 / Ice1).